Reading from the N-terminus, the 509-residue chain is Lanosterol 14-alpha demethylase (509 aa).

Residues 30-50 (GNLLSMLLIACAFTLSLVYLI) traverse the membrane as a helical segment. Cysteine 455 serves as a coordination point for heme.

This sequence belongs to the cytochrome P450 family. Heme serves as cofactor. Post-translationally, ubiquitinated by MARCHF6, leading to proteasomal degradation. As to expression, ubiquitously expressed with highest levels in testis, ovary, adrenal, prostate, liver, kidney and lung.

It localises to the endoplasmic reticulum membrane. The protein localises to the microsome membrane. The catalysed reaction is a 14alpha-methyl steroid + 3 reduced [NADPH--hemoprotein reductase] + 3 O2 = a Delta(14) steroid + formate + 3 oxidized [NADPH--hemoprotein reductase] + 4 H2O + 4 H(+). It catalyses the reaction lanosterol + 3 reduced [NADPH--hemoprotein reductase] + 3 O2 = 4,4-dimethyl-5alpha-cholesta-8,14,24-trien-3beta-ol + formate + 3 oxidized [NADPH--hemoprotein reductase] + 4 H2O + 4 H(+). The enzyme catalyses 24,25-dihydrolanosterol + 3 reduced [NADPH--hemoprotein reductase] + 3 O2 = 4,4-dimethyl-8,14-cholestadien-3beta-ol + formate + 3 oxidized [NADPH--hemoprotein reductase] + 4 H2O + 4 H(+). It carries out the reaction a 14alpha-methyl steroid + reduced [NADPH--hemoprotein reductase] + O2 = a 14alpha-hydroxymethyl steroid + oxidized [NADPH--hemoprotein reductase] + H2O + H(+). The catalysed reaction is a 14alpha-hydroxymethyl steroid + reduced [NADPH--hemoprotein reductase] + O2 = a 14alpha-formyl steroid + oxidized [NADPH--hemoprotein reductase] + 2 H2O + H(+). It catalyses the reaction a 14alpha-formyl steroid + reduced [NADPH--hemoprotein reductase] + O2 = a Delta(14) steroid + formate + oxidized [NADPH--hemoprotein reductase] + H2O + 2 H(+). The enzyme catalyses lanosterol + reduced [NADPH--hemoprotein reductase] + O2 = 32-hydroxylanosterol + oxidized [NADPH--hemoprotein reductase] + H2O + H(+). It carries out the reaction 32-hydroxylanosterol + reduced [NADPH--hemoprotein reductase] + O2 = 32-oxolanosterol + oxidized [NADPH--hemoprotein reductase] + 2 H2O + H(+). The catalysed reaction is 32-oxolanosterol + reduced [NADPH--hemoprotein reductase] + O2 = 4,4-dimethyl-5alpha-cholesta-8,14,24-trien-3beta-ol + formate + oxidized [NADPH--hemoprotein reductase] + H2O + 2 H(+). It catalyses the reaction 24,25-dihydrolanosterol + reduced [NADPH--hemoprotein reductase] + O2 = 32-hydroxy-24,25-dihydrolanosterol + oxidized [NADPH--hemoprotein reductase] + H2O + H(+). The enzyme catalyses 32-hydroxy-24,25-dihydrolanosterol + reduced [NADPH--hemoprotein reductase] + O2 = 32-oxo-24,25-dihydrolanosterol + oxidized [NADPH--hemoprotein reductase] + 2 H2O + H(+). It carries out the reaction 32-oxo-24,25-dihydrolanosterol + reduced [NADPH--hemoprotein reductase] + O2 = 4,4-dimethyl-8,14-cholestadien-3beta-ol + formate + oxidized [NADPH--hemoprotein reductase] + H2O + 2 H(+). It functions in the pathway steroid biosynthesis; zymosterol biosynthesis; zymosterol from lanosterol: step 1/6. With respect to regulation, inhibited by azalanstat. Inhibited by azole antifungal agents ketoconazole, itraconazole and fluconazole. Its function is as follows. Sterol 14alpha-demethylase that plays a critical role in the cholesterol biosynthesis pathway, being cholesterol the major sterol component in mammalian membranes as well as a precursor for bile acid and steroid hormone synthesis. Cytochrome P450 monooxygenase that catalyzes the three-step oxidative removal of the 14alpha-methyl group (C-32) of sterols such as lanosterol (lanosta-8,24-dien-3beta-ol) and 24,25-dihydrolanosterol (DHL) in the form of formate, and converts the sterols to 4,4-dimethyl-5alpha-cholesta-8,14,24-trien-3beta-ol and 4,4-dimethyl-8,14-cholestadien-3beta-ol, respectively, which are intermediates of cholesterol biosynthesis. Can also demethylate substrates not intrinsic to mammals, such as eburicol (24-methylene-24,25-dihydrolanosterol), but at a lower rate than DHL. This chain is Lanosterol 14-alpha demethylase, found in Homo sapiens (Human).